Reading from the N-terminus, the 173-residue chain is Ribosome maturation factor RimM (173 aa).

Residues 94–173 (EGEFYWRDLI…TIEVDWDPGF (80 aa)) form the PRC barrel domain.

It belongs to the RimM family. Binds ribosomal protein uS19.

It localises to the cytoplasm. An accessory protein needed during the final step in the assembly of 30S ribosomal subunit, possibly for assembly of the head region. Essential for efficient processing of 16S rRNA. May be needed both before and after RbfA during the maturation of 16S rRNA. It has affinity for free ribosomal 30S subunits but not for 70S ribosomes. The chain is Ribosome maturation factor RimM from Aeromonas salmonicida (strain A449).